Here is a 284-residue protein sequence, read N- to C-terminus: Bifunctional protein FolD (284 aa).

NADP(+) contacts are provided by residues 164–166 (GRS) and Ser-189.

This sequence belongs to the tetrahydrofolate dehydrogenase/cyclohydrolase family. As to quaternary structure, homodimer.

The catalysed reaction is (6R)-5,10-methylene-5,6,7,8-tetrahydrofolate + NADP(+) = (6R)-5,10-methenyltetrahydrofolate + NADPH. The enzyme catalyses (6R)-5,10-methenyltetrahydrofolate + H2O = (6R)-10-formyltetrahydrofolate + H(+). It participates in one-carbon metabolism; tetrahydrofolate interconversion. Its function is as follows. Catalyzes the oxidation of 5,10-methylenetetrahydrofolate to 5,10-methenyltetrahydrofolate and then the hydrolysis of 5,10-methenyltetrahydrofolate to 10-formyltetrahydrofolate. The polypeptide is Bifunctional protein FolD (Listeria monocytogenes serotype 4b (strain F2365)).